Here is a 199-residue protein sequence, read N- to C-terminus: Dephospho-CoA kinase (199 aa).

Residues 3–199 (RIGLTGGIGS…HCKYLQIAQT (197 aa)) enclose the DPCK domain. 11–16 (GSGKST) provides a ligand contact to ATP.

This sequence belongs to the CoaE family.

It is found in the cytoplasm. The enzyme catalyses 3'-dephospho-CoA + ATP = ADP + CoA + H(+). The protein operates within cofactor biosynthesis; coenzyme A biosynthesis; CoA from (R)-pantothenate: step 5/5. In terms of biological role, catalyzes the phosphorylation of the 3'-hydroxyl group of dephosphocoenzyme A to form coenzyme A. The sequence is that of Dephospho-CoA kinase from Coxiella burnetii (strain RSA 493 / Nine Mile phase I).